A 292-amino-acid chain; its full sequence is 31 kDa ribonucleoprotein, chloroplastic (292 aa).

The region spanning L88–A166 is the RRM 1 domain. The disordered stretch occupies residues P165–S203. The segment at P167–S207 is linker (Gly-rich). The segment covering F175 to D190 has biased composition (gly residues). In terms of domain architecture, RRM 2 spans N208–E286.

Expressed at high levels in the leaves and seedlings, and lower levels are seen in the stems and roots.

It localises to the plastid. The protein localises to the chloroplast. The polypeptide is 31 kDa ribonucleoprotein, chloroplastic (Nicotiana plumbaginifolia (Leadwort-leaved tobacco)).